A 926-amino-acid polypeptide reads, in one-letter code: OTU domain-containing protein 7A (926 aa).

Residues 75-99 (PHVFNEGRGPKQPEREPQPGHKVER) form a disordered region. Residues 82–99 (RGPKQPEREPQPGHKVER) show a composition bias toward basic and acidic residues. Ser119 carries the phosphoserine modification. A TRAF-binding region spans residues 168–410 (ERDLIEQATM…AVDPGKDWEW (243 aa)). The interval 183–449 (AGRLNWWSTV…VTWIRIPSET (267 aa)) is catalytic. An OTU domain is found at 199–374 (LLPLATTGDG…QAHFSALVSM (176 aa)). The active site involves Asp207. Residue Cys210 is the Nucleophile of the active site. The Proton acceptor role is filled by His367. 3 disordered regions span residues 452-514 (PLAQ…DSVA), 537-613 (GLVH…DAWK), and 668-768 (EQEQ…APAR). Over residues 481 to 491 (VCSNSNSNNGK) the composition is skewed to low complexity. A compositionally biased stretch (basic and acidic residues) spans 492–510 (NGKDKEKEKQRKEKDKTRA). Positions 494 to 509 (KDKEKEKQRKEKDKTR) match the Nuclear localization signal motif. 3 stretches are compositionally biased toward low complexity: residues 576–592 (GASA…PSPT), 677–691 (ATAA…AATA), and 729–742 (PAAG…AGGT). An Omega-N-methylarginine modification is found at Arg880. The A20-type zinc finger occupies 884–919 (GPVQRRCQRENCAFYGRAETEHYCSYCYREELRRRR). Cys890, Cys895, Cys907, and Cys910 together coordinate Zn(2+).

This sequence belongs to the peptidase C64 family.

Its subcellular location is the cytoplasm. The protein localises to the nucleus. The catalysed reaction is Thiol-dependent hydrolysis of ester, thioester, amide, peptide and isopeptide bonds formed by the C-terminal Gly of ubiquitin (a 76-residue protein attached to proteins as an intracellular targeting signal).. Deubiquitinase, which cleaves 'Lys-11'-linked polyubiquitin chains. Might be required for PA28-20S proteasome assembly. The protein is OTU domain-containing protein 7A (OTUD7A) of Homo sapiens (Human).